Consider the following 655-residue polypeptide: NADH-ubiquinone oxidoreductase chain 5 (655 aa).

Transmembrane regions (helical) follow at residues 3 to 23 (NAISLIIILPCISWLFPLFFG), 34 to 54 (MTSTLIIITTLITYYYFYQLL), 84 to 104 (LTITMLLAITTISSMVHIYSI), 116 to 136 (FFSLLSMFTFWMIILVTGSNY), 137 to 157 (FVLFVGWEFIGVTSYLLISFW), 180 to 200 (FFVLGLCVIAYVFGTLNYSTI), 204 to 224 (AYLINTDLLVLIMLALFIAAM), 244 to 264 (TPVSSLLHAATLVTAGIYLLL), 276 to 296 (VLFIILWIGALTTLSAGLIAI), 304 to 322 (IIALSTMSQLGMMTIAIGL), 332 to 354 (LLGHAFFKALLFMSAGSIIHSIL), 370 to 390 (LPYTYICITIASLSLMAMPGL), 413 to 433 (VVYWIAYLSAVLTCVYSMKIL), 456 to 476 (IYITLPMFILAIFAMFAGWIL), 516 to 536 (ISAILVSILIVVLNEFFAIVF), and 629 to 649 (LLLVLVMNVNFIIVIPVLISI).

This sequence belongs to the complex I subunit 5 family. In terms of assembly, complex I is composed of 37 different subunits.

It localises to the mitochondrion inner membrane. It catalyses the reaction a ubiquinone + NADH + 5 H(+)(in) = a ubiquinol + NAD(+) + 4 H(+)(out). Its function is as follows. Core subunit of the mitochondrial membrane respiratory chain NADH dehydrogenase (Complex I) that is believed to belong to the minimal assembly required for catalysis. Complex I functions in the transfer of electrons from NADH to the respiratory chain. The immediate electron acceptor for the enzyme is believed to be ubiquinone. The protein is NADH-ubiquinone oxidoreductase chain 5 (ND5) of Yarrowia lipolytica (strain CLIB 122 / E 150) (Yeast).